The chain runs to 833 residues: Vacuolar protein sorting-associated protein 16 homolog (833 aa).

It belongs to the VPS16 family. As to quaternary structure, component of the homotypic fusion and vacuole protein sorting (HOPS) complex, composed of Vps16A, car/Vps33A, dor/Vps18, Vps39, Vps11 and lt/Vps41. Interacts with Syx17 (via SNARE domain); the interaction may involve multiple components of the HOPS complex and may promote assembly of the Syx17-Snap29-Vamp7 trans-SNARE complex. Component of the class C core vacuole/endosome tethering (CORVET) complex composed of at least Vps8, dor/Vps18, car/Vps33A and Vps16A; unlike in other species, Vps11 is not part of the Drosophila complex. Due to the reduced number of components the Drosophila CORVET complex is often referred to as the miniCORVET complex. The tethering complex core made up of Vps16A, car/Vps33A and dor/Vps18 and shared by both HOPS and CORVET, preferentially associates with CORVET-specific Vps8 over HOPS-specific lt/Vps41. Interacts with Rab2 (GTP-bound form).

It is found in the late endosome membrane. Its subcellular location is the lysosome membrane. It localises to the cytoplasmic vesicle. The protein resides in the autophagosome. Functionally, core component of the class C core vacuole/endosome tethering (CORVET) and the homotypic fusion and vacuole protein sorting (HOPS) tethering complexes involved in endo-lysosomal vesicle trafficking and lysosome biogenesis. The CORVET complex facilitates docking and fusion of endosomal vesicles during endosome maturation, acts upstream of HOPS, but is not involved in autophagic flux. The CORVET complex may cooperate with the early endosomal tether Rbsn-5 to mediate endosomal fusion. The HOPS complex facilitates docking and fusion of lysosomes with late endosomes and several other types of vesicles. The HOPS complex is also involved in autophagy and crinophagy (the elimination of unused secretory granules through their fusion with lysosomes). The HOPS complex mediates autophagocitic flux, probably by binding autophagosome-associated Syx17/syntaxin 17, promoting assembly of the trans-SNARE complex and instigating autophagosome-lysosome fusion. Independent of Syx17/syntaxin 17, HOPS is involved in biosynthetic transport to lysosomes and lysosome-related organelles such as eye-pigment granules. Required for endocytic degradation of boss/bride of sevenless and N/Notch in developing ommatidia. This Drosophila melanogaster (Fruit fly) protein is Vacuolar protein sorting-associated protein 16 homolog.